The primary structure comprises 115 residues: Phosphoribosyl-ATP pyrophosphatase (115 aa).

It belongs to the PRA-PH family.

The protein localises to the cytoplasm. The catalysed reaction is 1-(5-phospho-beta-D-ribosyl)-ATP + H2O = 1-(5-phospho-beta-D-ribosyl)-5'-AMP + diphosphate + H(+). Its pathway is amino-acid biosynthesis; L-histidine biosynthesis; L-histidine from 5-phospho-alpha-D-ribose 1-diphosphate: step 2/9. This Bordetella bronchiseptica (strain ATCC BAA-588 / NCTC 13252 / RB50) (Alcaligenes bronchisepticus) protein is Phosphoribosyl-ATP pyrophosphatase.